The following is a 340-amino-acid chain: Phosphoribosylformylglycinamidine cyclo-ligase (340 aa).

Belongs to the AIR synthase family.

The protein localises to the cytoplasm. It carries out the reaction 2-formamido-N(1)-(5-O-phospho-beta-D-ribosyl)acetamidine + ATP = 5-amino-1-(5-phospho-beta-D-ribosyl)imidazole + ADP + phosphate + H(+). It participates in purine metabolism; IMP biosynthesis via de novo pathway; 5-amino-1-(5-phospho-D-ribosyl)imidazole from N(2)-formyl-N(1)-(5-phospho-D-ribosyl)glycinamide: step 2/2. The polypeptide is Phosphoribosylformylglycinamidine cyclo-ligase (Streptococcus mutans serotype c (strain ATCC 700610 / UA159)).